Consider the following 1451-residue polypeptide: MALETEAKNSNATATGDATATKASSKAKENNNTAGGKKNLNPIPSQQNSNQNLVNGNGTAADGPAGKKKGKKNRNKSPPEPTTEAVLSNGHAEKSTAEYAAEDNADADANANVEKPEDGGAPDAEADGEDIDLDALQDVGITVNISSPGADVLCVQLSSMELVQEIHQLLMDREETCHRTCFSLQLDNATLDNFAELKAISNLEQGSTIKVVEEPYTMREARIHVRHVRDLLKNLDPADAYNGIDCTSLTYLNTITQGDLLDKKKTRPDSVDCTPPEYVTPGVSEPPLLPLHPNVKNAKGPQALKVLTTSAWNPPPGPRKLHGDLMYLYVVTMEEKRFHISACSKGFYINQSTDDTFNPKPDNPSHLSHSLIDLLSHISPSFRRAFQTIQKRRTMRHAFERVATPYQVYQWASPTLEHTVDAIRAEDAFSSKLGYEEHIPGQTRDWNEELQTTRELPRKTLPERLLRERAIFKVHGDFVTAATRGAMAVIDGNVLAINPGEDPKMQMFIWNNIFFSLGFDVRDHYKELGGDAAAFVAPRYDLHGVRVYNAVDVEGLYTLGTVVIDYRGYRVTAQSIIPGILEREQEQSVVYGSIDFGKTVLSHPKYLELLRQAGKHLKILPHAVLNERDEPVELCSSVECKGIIGNDGRHYILDLLRTFPPDVNFLKLQDVQLSKELVDMGFPIEHRHKLCCLRQELLEAFIEDRHVSFIRIAAVHLQQLNAKKQSEKTEGKPVPALEGADAASKVNGADKTDVKEEKNEENEEKAQSTTGESKTAEAMVNAIREAQSNVATSNEVQAAEVVKRACAAVGSLKEKEFDFRFNPDVFSPGIRHVDGEEGTCSSLAKQKVLVQEAAEFLVLKQIPAFIKEHMTHSSPPIDGQSLTESLHSHGINVRYLGKVIKILGQMPRMDYLHRIAVLELIVRATKHIYYTYMQNTEPLHLSAAISHFLNCLLTNGPVNPAVSSEEAHKKRGNGGKHNKHKSSKGGKGQQQQQTTGNQNGSSSGTSNGSSVSDWTLVTPRSLWQQIRKEAKVYWDWELDCDSIETAVSKYGILRISLLRAFCLKVGIQVLLREYNFESKHKPTFGDDDVVNVFPVVKHISPRATDAYNFYTTGQAKIQQGMFKEGYELISGALNLLNNVFGALHQENGSCLRMLARLSYLLGDAQDALAIQQRAVIMSERVNGMDHPSTILEYTHLSLYSFANGHVGMSLKLLYRARYLMVLICGEDHPEVALIDSNISLILHALGEYELSLRFIEHALKLNLKYFGDKAMPVALSYHLMARTQSCMGDFRSALNNEKETYSFYKSQLGENHEKTRDSAECLRLLTQQAVLLQRKMNDIYSSGKLTSDLPPIHITPPSMGSVLDMLNTINGILFVKISRKDIVKVRSEIEKHFKADSPENEVNDAINSIVAAANNNGEAEDADPKDVKEQAQAGTQLTNGEKAAATEATSS.

2 disordered regions span residues 1 to 101 (MALE…EYAA) and 264 to 286 (KKTR…VSEP). The span at 9 to 53 (NSNATATGDATATKASSKAKENNNTAGGKKNLNPIPSQQNSNQNL) shows a compositional bias: low complexity. Positions 66 to 75 (GKKKGKKNRN) are enriched in basic residues. Residue Ser-270 is modified to Phosphoserine. Residues 424–666 (RAEDAFSSKL…RTFPPDVNFL (243 aa)) form the Clu domain. Disordered stretches follow at residues 722–775 (AKKQ…ESKT), 961–1012 (AVSS…SSVS), and 1413–1451 (ANNN…ATSS). Residues 748–758 (GADKTDVKEEK) are compositionally biased toward basic and acidic residues. The segment covering 969 to 984 (KKRGNGGKHNKHKSSK) has biased composition (basic residues). Positions 989–1010 (QQQQQTTGNQNGSSSGTSNGSS) are enriched in low complexity.

It belongs to the CLU family.

Its subcellular location is the cytoplasm. MRNA-binding protein involved in proper cytoplasmic distribution of mitochondria. The chain is Protein clueless from Drosophila yakuba (Fruit fly).